Reading from the N-terminus, the 478-residue chain is MTLSFITRWRDELPATYTALSPTPLNNARLIWHNTELANTLSIPSSLFKNGAGVWGGETLLPGMSPLAQVYSGHQFGVWAGQLGDGRGILLGEQLLADGTTMDWHLKGAGLTPYSRMGDGRAVLRSTIRESLASEAMHYLGIPTTRALSIVTSDSPVYRETVEPGAMLMRVAPSHLRFGHFEHFYYRREPEKVRQLADFAIRHYWSYLEDDEDKYRLWFSDVVARTASLIAQWQTVGFAHGVMNTDNMSLLGLTLDYGPFGFLDDYEPGFICNHSDHQGRYSFDNQPAVALWNLHRLAQTLSPFVAVDALNEALDSYQQVLLTHYGQRMRQKLGFMTEQKEDNALLNELFSLMARERSDYTRTFRMLSLTEQHSAASPLRDEFIDRAAFDDWFARYRGRLQQDEVSDSERQQLMQSVNPALVLRNWLAQRAIEAAEKGDMTELHRLHEALRNPFSDRDDDYVSRPPDWGKRLEVSCSS.

ATP is bound by residues Gly84, Gly86, Arg87, Lys107, Asp119, Gly120, Arg170, and Arg177. Residue Asp246 is the Proton acceptor of the active site. Mg(2+)-binding residues include Asn247 and Asp256. Asp256 lines the ATP pocket.

Belongs to the SELO family. Mg(2+) serves as cofactor. Mn(2+) is required as a cofactor.

It catalyses the reaction L-seryl-[protein] + ATP = 3-O-(5'-adenylyl)-L-seryl-[protein] + diphosphate. It carries out the reaction L-threonyl-[protein] + ATP = 3-O-(5'-adenylyl)-L-threonyl-[protein] + diphosphate. The catalysed reaction is L-tyrosyl-[protein] + ATP = O-(5'-adenylyl)-L-tyrosyl-[protein] + diphosphate. The enzyme catalyses L-histidyl-[protein] + UTP = N(tele)-(5'-uridylyl)-L-histidyl-[protein] + diphosphate. It catalyses the reaction L-seryl-[protein] + UTP = O-(5'-uridylyl)-L-seryl-[protein] + diphosphate. It carries out the reaction L-tyrosyl-[protein] + UTP = O-(5'-uridylyl)-L-tyrosyl-[protein] + diphosphate. Functionally, nucleotidyltransferase involved in the post-translational modification of proteins. It can catalyze the addition of adenosine monophosphate (AMP) or uridine monophosphate (UMP) to a protein, resulting in modifications known as AMPylation and UMPylation. In Escherichia coli O139:H28 (strain E24377A / ETEC), this protein is Protein nucleotidyltransferase YdiU.